A 150-amino-acid polypeptide reads, in one-letter code: Infection structure-specific protein 24 (150 aa).

Involved in the development of infection structures. The germ tube elongates across the leaf surface of the infected plant until it recognizes a stomate. Physical stimuli provided by the stomate induce differentiation of the germ tube to form a series of infection structures involved in host colonization. This is Infection structure-specific protein 24 (INF24) from Uromyces appendiculatus (Rust fungus).